The primary structure comprises 347 residues: 4-hydroxyproline 2-epimerase (347 aa).

Substrate is bound at residue glutamine 85. Residue serine 93 is the Proton acceptor of the active site. Substrate contacts are provided by residues 94–95 (GS) and aspartate 251. Catalysis depends on cysteine 255, which acts as the Proton donor. 256-257 (GT) provides a ligand contact to substrate.

The protein belongs to the proline racemase family.

The enzyme catalyses trans-4-hydroxy-L-proline = cis-4-hydroxy-D-proline. In terms of biological role, catalyzes the epimerization of trans-4-hydroxy-L-proline (t4LHyp) to cis-4-hydroxy-D-proline (c4DHyp). May be involved in a degradation pathway of t4LHyp. Can also catalyze the epimerization of trans-3-hydroxy-L-proline (t3LHyp) to cis-3-hydroxy-D-proline (c3DHyp) in vitro. Displays no proline racemase activity. The polypeptide is 4-hydroxyproline 2-epimerase (Allorhizobium ampelinum (strain ATCC BAA-846 / DSM 112012 / S4) (Agrobacterium vitis (strain S4))).